The primary structure comprises 814 residues: Microbial collagenase (814 aa).

The first 21 residues, 1 to 21 (MELKILSVAIATTLTSTGVFA), serve as a signal peptide directing secretion. A propeptide spanning residues 22 to 75 (LSEPVSQVTEQHAHSAHTHGVEFNRVEYQPTATLPIQPSKATRVQSLESLDESS) is cleaved from the precursor. H477 contributes to the Zn(2+) binding site. E478 is a catalytic residue. H481 is a Zn(2+) binding site. The PKD domain maps to 609-697 (APNAVITANS…VVISALGGND (89 aa)).

The protein belongs to the peptidase M9A family. Zn(2+) is required as a cofactor. Proteolytic cleavage might yield three different active forms.

Its subcellular location is the secreted. The catalysed reaction is Digestion of native collagen in the triple helical region at Xaa-|-Gly bonds. With synthetic peptides, a preference is shown for Gly at P3 and P1', Pro and Ala at P2 and P2', and hydroxyproline, Ala or Arg at P3'.. The protein is Microbial collagenase of Vibrio alginolyticus.